Here is a 421-residue protein sequence, read N- to C-terminus: Gamma-glutamyl phosphate reductase (421 aa).

Belongs to the gamma-glutamyl phosphate reductase family.

The protein resides in the cytoplasm. The catalysed reaction is L-glutamate 5-semialdehyde + phosphate + NADP(+) = L-glutamyl 5-phosphate + NADPH + H(+). Its pathway is amino-acid biosynthesis; L-proline biosynthesis; L-glutamate 5-semialdehyde from L-glutamate: step 2/2. Catalyzes the NADPH-dependent reduction of L-glutamate 5-phosphate into L-glutamate 5-semialdehyde and phosphate. The product spontaneously undergoes cyclization to form 1-pyrroline-5-carboxylate. The protein is Gamma-glutamyl phosphate reductase of Pseudomonas aeruginosa (strain ATCC 15692 / DSM 22644 / CIP 104116 / JCM 14847 / LMG 12228 / 1C / PRS 101 / PAO1).